The following is a 602-amino-acid chain: Aspartate--tRNA(Asp/Asn) ligase (602 aa).

Residue Glu-170 participates in L-aspartate binding. Positions 194 to 197 are aspartate; the sequence is QLFK. Residue Arg-216 participates in L-aspartate binding. ATP-binding positions include 216–218 and Gln-225; that span reads RDE. His-448 contacts L-aspartate. Glu-482 contacts ATP. Arg-489 serves as a coordination point for L-aspartate. 534–537 is a binding site for ATP; it reads GWDR. Positions 559 to 602 are disordered; that stretch reads GGVDPLTSAPAPITAQQRKESGVDAKPEPKGDAAAAKPQVSAEK. Residues 575–589 are compositionally biased toward basic and acidic residues; the sequence is QRKESGVDAKPEPKG.

Belongs to the class-II aminoacyl-tRNA synthetase family. Type 1 subfamily. As to quaternary structure, homodimer.

It localises to the cytoplasm. The catalysed reaction is tRNA(Asx) + L-aspartate + ATP = L-aspartyl-tRNA(Asx) + AMP + diphosphate. In terms of biological role, aspartyl-tRNA synthetase with relaxed tRNA specificity since it is able to aspartylate not only its cognate tRNA(Asp) but also tRNA(Asn). Reaction proceeds in two steps: L-aspartate is first activated by ATP to form Asp-AMP and then transferred to the acceptor end of tRNA(Asp/Asn). This is Aspartate--tRNA(Asp/Asn) ligase from Rhodococcus opacus (strain B4).